The following is a 20-amino-acid chain: Hemoglobinase-like protein 1 (20 aa).

The protein belongs to the peptidase C13 family.

It carries out the reaction Hydrolysis of proteins and small molecule substrates at -Asn-|-Xaa- bonds.. This is Hemoglobinase-like protein 1 from Fasciola hepatica (Liver fluke).